We begin with the raw amino-acid sequence, 295 residues long: MSSSRPVFRSRWLPYLLVAPQLIITVIFFIWPAGEALWYSLQSVDPFGFSSQFVGLDNFVTLFHDSYYLDAFWTTIKFSTFVTVSGLLVSLFFAALVEYIVRGSRFYQTLMLLPYAVAPAVAAVLWIFLFNPGRGLITHFLAEFGYDWNHAQNSGQAMFLVVFASVWKQISYNFLFFYAALQSIPRSLIEAAAIDGAGPIRRFFKIALPLIAPVSFFLLVVNLVYAFFDTFPVIDAATSGGPVQATTTLIYKIYREGFTGLDLASSAAQSVVLMFLVIVLTVVQFRYVEGKVRYQ.

Over 1–11 (MSSSRPVFRSR) the chain is Cytoplasmic. The chain crosses the membrane as a helical span at residues 12–32 (WLPYLLVAPQLIITVIFFIWP). Topologically, residues 33–80 (AGEALWYSLQSVDPFGFSSQFVGLDNFVTLFHDSYYLDAFWTTIKFST) are periplasmic. An ABC transmembrane type-1 domain is found at 76-284 (IKFSTFVTVS…FLVIVLTVVQ (209 aa)). The helical transmembrane segment at 81–101 (FVTVSGLLVSLFFAALVEYIV) threads the bilayer. The Cytoplasmic portion of the chain corresponds to 102-109 (RGSRFYQT). Residues 110-130 (LMLLPYAVAPAVAAVLWIFLF) form a helical membrane-spanning segment. The Periplasmic portion of the chain corresponds to 131–156 (NPGRGLITHFLAEFGYDWNHAQNSGQ). The chain crosses the membrane as a helical span at residues 157–177 (AMFLVVFASVWKQISYNFLFF). At 178 to 207 (YAALQSIPRSLIEAAAIDGAGPIRRFFKIA) the chain is on the cytoplasmic side. The chain crosses the membrane as a helical span at residues 208-228 (LPLIAPVSFFLLVVNLVYAFF). Over 229–262 (DTFPVIDAATSGGPVQATTTLIYKIYREGFTGLD) the chain is Periplasmic. A helical transmembrane segment spans residues 263-283 (LASSAAQSVVLMFLVIVLTVV). At 284–295 (QFRYVEGKVRYQ) the chain is on the cytoplasmic side.

It belongs to the binding-protein-dependent transport system permease family. UgpAE subfamily. The complex is composed of two ATP-binding proteins (UgpC), two transmembrane proteins (UgpA and UgpE) and a solute-binding protein (UgpB).

It is found in the cell inner membrane. Its function is as follows. Part of the ABC transporter complex UgpBAEC involved in sn-glycerol-3-phosphate (G3P) import. Probably responsible for the translocation of the substrate across the membrane. This is sn-glycerol-3-phosphate transport system permease protein UgpA (ugpA) from Escherichia coli O6:K15:H31 (strain 536 / UPEC).